A 320-amino-acid polypeptide reads, in one-letter code: Cytochrome f (320 aa).

Residues 1–35 form the signal peptide; the sequence is MQTRNTFSWIKEEITRSISVSLMIYIITGASISNA. Residues Tyr-36, Cys-56, Cys-59, and His-60 each coordinate heme. A helical transmembrane segment spans residues 286–306; it reads VQGLLFFLASIVFAQIFLVLK.

It belongs to the cytochrome f family. As to quaternary structure, the 4 large subunits of the cytochrome b6-f complex are cytochrome b6, subunit IV (17 kDa polypeptide, petD), cytochrome f and the Rieske protein, while the 4 small subunits are PetG, PetL, PetM and PetN. The complex functions as a dimer. Heme serves as cofactor.

It is found in the plastid. The protein resides in the chloroplast thylakoid membrane. Functionally, component of the cytochrome b6-f complex, which mediates electron transfer between photosystem II (PSII) and photosystem I (PSI), cyclic electron flow around PSI, and state transitions. The chain is Cytochrome f from Gossypium hirsutum (Upland cotton).